The chain runs to 304 residues: UDP-3-O-acyl-N-acetylglucosamine deacetylase (304 aa).

Residues His-77, His-233, and Asp-237 each contribute to the Zn(2+) site. The active-site Proton donor is His-260.

This sequence belongs to the LpxC family. Requires Zn(2+) as cofactor.

It carries out the reaction a UDP-3-O-[(3R)-3-hydroxyacyl]-N-acetyl-alpha-D-glucosamine + H2O = a UDP-3-O-[(3R)-3-hydroxyacyl]-alpha-D-glucosamine + acetate. It participates in glycolipid biosynthesis; lipid IV(A) biosynthesis; lipid IV(A) from (3R)-3-hydroxytetradecanoyl-[acyl-carrier-protein] and UDP-N-acetyl-alpha-D-glucosamine: step 2/6. Its function is as follows. Catalyzes the hydrolysis of UDP-3-O-myristoyl-N-acetylglucosamine to form UDP-3-O-myristoylglucosamine and acetate, the committed step in lipid A biosynthesis. This Lawsonia intracellularis (strain PHE/MN1-00) protein is UDP-3-O-acyl-N-acetylglucosamine deacetylase.